The sequence spans 362 residues: UDP-N-acetylglucosamine--N-acetylmuramyl-(pentapeptide) pyrophosphoryl-undecaprenol N-acetylglucosamine transferase (362 aa).

Residues 10 to 12, asparagine 124, serine 194, isoleucine 249, and glutamine 294 contribute to the UDP-N-acetyl-alpha-D-glucosamine site; that span reads TGG.

This sequence belongs to the glycosyltransferase 28 family. MurG subfamily.

Its subcellular location is the cell membrane. The catalysed reaction is Mur2Ac(oyl-L-Ala-gamma-D-Glu-L-Lys-D-Ala-D-Ala)-di-trans,octa-cis-undecaprenyl diphosphate + UDP-N-acetyl-alpha-D-glucosamine = beta-D-GlcNAc-(1-&gt;4)-Mur2Ac(oyl-L-Ala-gamma-D-Glu-L-Lys-D-Ala-D-Ala)-di-trans,octa-cis-undecaprenyl diphosphate + UDP + H(+). The protein operates within cell wall biogenesis; peptidoglycan biosynthesis. Functionally, cell wall formation. Catalyzes the transfer of a GlcNAc subunit on undecaprenyl-pyrophosphoryl-MurNAc-pentapeptide (lipid intermediate I) to form undecaprenyl-pyrophosphoryl-MurNAc-(pentapeptide)GlcNAc (lipid intermediate II). In Pediococcus pentosaceus (strain ATCC 25745 / CCUG 21536 / LMG 10740 / 183-1w), this protein is UDP-N-acetylglucosamine--N-acetylmuramyl-(pentapeptide) pyrophosphoryl-undecaprenol N-acetylglucosamine transferase.